Reading from the N-terminus, the 1121-residue chain is tRNA (34-2'-O)-methyltransferase regulator WDR6 (1121 aa).

Met-1 carries the N-acetylmethionine modification. 19 WD repeats span residues 53 to 97 (IKRV…VVKI), 105 to 143 (WELW…LYDP), 147 to 189 (CILQ…VWYP), 200 to 238 (APDR…IWKV), 247 to 285 (RVQN…VWSH), 289 to 327 (ILQA…LWHL), 335 to 376 (LGVS…LYDV), 381 to 422 (WEQL…VVPI), 425 to 470 (PTAA…ISAA), 476 to 520 (IFVK…LFPS), 559 to 598 (PVST…FVRD), 604 to 642 (VLRQ…VWNP), 645 to 684 (HEKL…LYRA), 739 to 785 (LTDI…VWGI), 848 to 893 (RNRH…LFLL), 901 to 946 (QLLA…FWDL), 970 to 1012 (GTPS…VFVL), 1036 to 1073 (EEYS…FWRL), and 1079 to 1121 (TFMN…NWYD).

Belongs to the WD repeat WDR6 family. As to quaternary structure, interacts with FTSJ1; the interaction is direct, and required for 2'-O-methylation of position 34 in substrate tRNAs. Interacts with IRS4. Interacts with STK11/LKB1. In terms of tissue distribution, ubiquitous.

The protein localises to the cytoplasm. Together with methyltransferase FTSJ1, methylates the 2'-O-ribose of nucleotides at position 34 of the tRNA anticodon loop of substrate tRNAs. Required for the correct positioning of the substrate tRNA for methylation. Required to suppress amino acid starvation-induced autophagy. Enhances the STK11/LKB1-induced cell growth suppression activity. This is tRNA (34-2'-O)-methyltransferase regulator WDR6 (WDR6) from Homo sapiens (Human).